The sequence spans 179 residues: B-cell acute lymphoblastic leukemia-expressed protein (179 aa).

Disordered regions lie at residues 1–20 and 65–86; these read MMKDIIPASSWASEESTDLQ and RDTPPPVTSPRGDGICVSRGKA. Polar residues predominate over residues 10–20; the sequence is SWASEESTDLQ.

The protein is B-cell acute lymphoblastic leukemia-expressed protein (BLACE) of Homo sapiens (Human).